We begin with the raw amino-acid sequence, 116 residues long: Large ribosomal subunit protein bL17 (116 aa).

The protein belongs to the bacterial ribosomal protein bL17 family. As to quaternary structure, part of the 50S ribosomal subunit. Contacts protein L32.

The protein is Large ribosomal subunit protein bL17 of Dictyoglomus turgidum (strain DSM 6724 / Z-1310).